Here is a 358-residue protein sequence, read N- to C-terminus: Arogenate dehydrogenase 2, chloroplastic (358 aa).

Residues 1–36 constitute a chloroplast transit peptide; the sequence is MLLHFSPAKPLISPPNLRRNSPTFLISPPRSLRIRA. A Prephenate/arogenate dehydrogenase domain is found at 59–338; sequence LKIAVLGFGN…KKTEQKLLND (280 aa). A disordered region spans residues 336-358; sequence LNDGGVVPMNDISSSSSSSSSSS. Positions 348–358 are enriched in low complexity; sequence SSSSSSSSSSS.

This sequence belongs to the prephenate/arogenate dehydrogenase family. Expressed in roots, stems, leaves, flowers, siliques and seeds. More abundant in seeds.

The protein resides in the plastid. Its subcellular location is the chloroplast. It carries out the reaction L-arogenate + NADP(+) = L-tyrosine + CO2 + NADPH. It participates in amino-acid biosynthesis; L-tyrosine biosynthesis; L-tyrosine from L-arogenate (NADP(+) route): step 1/1. Involved in the biosynthesis of tyrosine. Has a weak prephenate dehydrogenase activity. The sequence is that of Arogenate dehydrogenase 2, chloroplastic (TYRAAT2) from Arabidopsis thaliana (Mouse-ear cress).